The chain runs to 453 residues: Kynureninase (453 aa).

Pyridoxal 5'-phosphate is bound by residues Leu-111, Thr-112, 139–142, Ser-196, Asp-226, His-229, and Tyr-251; that span reads FPSD. Lys-252 is subject to N6-(pyridoxal phosphate)lysine. Pyridoxal 5'-phosphate contacts are provided by Trp-286 and Asn-314.

Belongs to the kynureninase family. Homodimer. Pyridoxal 5'-phosphate serves as cofactor.

It is found in the cytoplasm. It localises to the nucleus. The enzyme catalyses L-kynurenine + H2O = anthranilate + L-alanine + H(+). The catalysed reaction is 3-hydroxy-L-kynurenine + H2O = 3-hydroxyanthranilate + L-alanine + H(+). The protein operates within amino-acid degradation; L-kynurenine degradation; L-alanine and anthranilate from L-kynurenine: step 1/1. It functions in the pathway cofactor biosynthesis; NAD(+) biosynthesis; quinolinate from L-kynurenine: step 2/3. Catalyzes the cleavage of L-kynurenine (L-Kyn) and L-3-hydroxykynurenine (L-3OHKyn) into anthranilic acid (AA) and 3-hydroxyanthranilic acid (3-OHAA), respectively. This Saccharomyces cerevisiae (strain ATCC 204508 / S288c) (Baker's yeast) protein is Kynureninase.